An 84-amino-acid polypeptide reads, in one-letter code: Anthracycline acyl carrier protein DauA (84 aa).

The Carrier domain maps to 3-80 (ELSLAELREI…SMLIFVNERL (78 aa)). Serine 40 carries the post-translational modification O-(pantetheine 4'-phosphoryl)serine.

Its pathway is antibiotic biosynthesis; daunorubicin biosynthesis. It participates in antibiotic biosynthesis; carminomycin biosynthesis. The protein operates within antibiotic biosynthesis; rhodomycin biosynthesis. It functions in the pathway antibiotic biosynthesis; aclacinomycin biosynthesis. In terms of biological role, involved in the biosynthesis of aklanonate which is an important precursor common to the formation of the clinically significant anthracyclines such as carminomycin, daunorubicin (daunomycin), rhodomycin, aclacinomycin T (aklavin) and aclacinomycin A (aclarubicin). These compounds are aromatic polyketide antibiotics that exhibit high cytotoxicity and are widely applied in the chemotherapy of a variety of cancers. This is Anthracycline acyl carrier protein DauA (dauA) from Streptomyces sp. (strain C5).